The primary structure comprises 108 residues: MLKTTLLFVVTALAEIIGCFLPYLWLRKGGSIWLLLPAALSLALFAWLLTLHPTASGRVYAAYGGVYVAVALLWLYWVDGVKLSAYDWAGAAVALLGMAIIAMGWQRS.

Helical transmembrane passes span 6–26, 31–51, 61–81, and 85–105; these read LLFV…YLWL, SIWL…LLTL, AAYG…VDGV, and AYDW…AMGW.

Belongs to the UPF0060 family.

It is found in the cell inner membrane. In Cellvibrio japonicus (strain Ueda107) (Pseudomonas fluorescens subsp. cellulosa), this protein is UPF0060 membrane protein CJA_3703.